Here is a 301-residue protein sequence, read N- to C-terminus: Ribosomal RNA small subunit methyltransferase H (301 aa).

Residues 25 to 27 (GGH), aspartate 45, phenylalanine 72, aspartate 94, and glutamine 101 each bind S-adenosyl-L-methionine.

Belongs to the methyltransferase superfamily. RsmH family.

The protein localises to the cytoplasm. The catalysed reaction is cytidine(1402) in 16S rRNA + S-adenosyl-L-methionine = N(4)-methylcytidine(1402) in 16S rRNA + S-adenosyl-L-homocysteine + H(+). Its function is as follows. Specifically methylates the N4 position of cytidine in position 1402 (C1402) of 16S rRNA. The sequence is that of Ribosomal RNA small subunit methyltransferase H from Methylococcus capsulatus (strain ATCC 33009 / NCIMB 11132 / Bath).